The chain runs to 204 residues: Twist-related protein 1 (204 aa).

A compositionally biased stretch (low complexity) spans 1–18; sequence MMQDVSSSPVSPADDSLS. The disordered stretch occupies residues 1 to 107; it reads MMQDVSSSPV…GGGSPQSYEE (107 aa). Positions 34 to 43 are enriched in basic residues; that stretch reads RGGRKRRSSR. Composition is skewed to gly residues over residues 46-65 and 80-101; these read AGGG…GGDE and GCGG…GGGS. The 52-residue stretch at 110–161 folds into the bHLH domain; it reads TQRVMANVRERQRTQSLNEAFAALRKIIPTLPSDKLSKIQTLKLAARYIDFL. The tract at residues 163 to 193 is sufficient for transactivation activity; the sequence is QVLQSDELDSKMASCSYVAHERFSYAFSVWR.

In terms of assembly, efficient DNA binding requires dimerization with another bHLH protein. Homodimer or heterodimer with E proteins such as TCF3. ID1 binds preferentially to TCF3 but does not interact efficiently with TWIST1 so ID1 levels control the amount of TCF3 available to dimerize with TWIST and thus determine the type of dimer formed.

The protein resides in the nucleus. In terms of biological role, acts as a transcriptional regulator. Inhibits myogenesis by sequestrating E proteins, inhibiting trans-activation by MEF2, and inhibiting DNA-binding by MYOD1 through physical interaction. This interaction probably involves the basic domains of both proteins. Also represses expression of pro-inflammatory cytokines such as TNFA and IL1B. Regulates cranial suture patterning and fusion. Activates transcription as a heterodimer with E proteins. Regulates gene expression differentially, depending on dimer composition. Homodimers induce expression of FGFR2 and POSTN while heterodimers repress FGFR2 and POSTN expression and induce THBS1 expression. Heterodimerization is also required for osteoblast differentiation. Represses the activity of the circadian transcriptional activator: NPAS2-BMAL1 heterodimer. The sequence is that of Twist-related protein 1 (TWIST1) from Nomascus concolor (Black crested gibbon).